The following is a 462-amino-acid chain: UDP-N-acetylmuramate--L-alanine ligase (462 aa).

Position 119-125 (119-125 (GTHGKTT)) interacts with ATP.

Belongs to the MurCDEF family.

It localises to the cytoplasm. It carries out the reaction UDP-N-acetyl-alpha-D-muramate + L-alanine + ATP = UDP-N-acetyl-alpha-D-muramoyl-L-alanine + ADP + phosphate + H(+). The protein operates within cell wall biogenesis; peptidoglycan biosynthesis. Its function is as follows. Cell wall formation. This chain is UDP-N-acetylmuramate--L-alanine ligase, found in Parabacteroides distasonis (strain ATCC 8503 / DSM 20701 / CIP 104284 / JCM 5825 / NCTC 11152).